Reading from the N-terminus, the 764-residue chain is Acylamino-acid-releasing enzyme (764 aa).

Catalysis depends on charge relay system residues Ser-618, Asp-707, and His-739.

It belongs to the peptidase S9C family. As to quaternary structure, homotetramer.

The protein localises to the cytoplasm. Its subcellular location is the nucleus. It catalyses the reaction Cleavage of an N-acetyl or N-formyl amino acid from the N-terminus of a polypeptide.. With respect to regulation, strongly inhibited by the serine protease inhibitor diisopropyl fluorophosphate. Functionally, catalyzes the hydrolysis of the N-terminal peptide bond of an N-acetylated peptide to generate an N-acetylated amino acid and a peptide with a free N-terminus. Can degrade the glycated RuBisCO (ribulose-1,5-bisphosphate carboxylase/oxygenase) protein but not the native protein. May be involved in the elimination of glycated proteins. Plays a homeostatic role in sustaining the cytoplasmic antioxidative system. May contribute to the elimination of the oxidized proteins in the cytoplasm. This is Acylamino-acid-releasing enzyme from Arabidopsis thaliana (Mouse-ear cress).